The following is a 393-amino-acid chain: Chalcone synthase 2 (393 aa).

The active site involves cysteine 166.

This sequence belongs to the thiolase-like superfamily. Chalcone/stilbene synthases family.

It catalyses the reaction (E)-4-coumaroyl-CoA + 3 malonyl-CoA + 3 H(+) = 2',4,4',6'-tetrahydroxychalcone + 3 CO2 + 4 CoA. It participates in secondary metabolite biosynthesis; flavonoid biosynthesis. In terms of biological role, the primary product of this enzyme is 4,2',4',6'-tetrahydroxychalcone (also termed naringenin-chalcone or chalcone) which can under specific conditions spontaneously isomerize into naringenin. The protein is Chalcone synthase 2 (CHS2) of Ruta graveolens (Common rue).